The sequence spans 581 residues: Mitosis inhibitor protein kinase mik1 (581 aa).

Disordered stretches follow at residues 43–71 (GHEE…HTPM) and 148–178 (NLTN…PLSP). Residues 59–71 (KPSNTKRSPHTPM) are compositionally biased toward polar residues. Positions 160–169 (PCKKGTKIKL) are enriched in basic residues. The region spanning 289 to 561 (FQQVKPIHES…LLAMPEMIFI (273 aa)) is the Protein kinase domain. Residues 295–303 (IHESDFSFV) and Lys-320 each bind ATP. Asp-417 acts as the Proton acceptor in catalysis. Mg(2+) is bound by residues Asn-422 and Asp-435.

It belongs to the protein kinase superfamily. Ser/Thr protein kinase family. WEE1 subfamily.

The enzyme catalyses L-seryl-[protein] + ATP = O-phospho-L-seryl-[protein] + ADP + H(+). It catalyses the reaction L-threonyl-[protein] + ATP = O-phospho-L-threonyl-[protein] + ADP + H(+). In terms of biological role, protein kinase that acts both on serines and on tyrosines. It acts as a negative regulator of entry into mitosis (G2 to M transition). Phosphorylates and inhibits cdc2. The sequence is that of Mitosis inhibitor protein kinase mik1 (mik1) from Schizosaccharomyces pombe (strain 972 / ATCC 24843) (Fission yeast).